A 651-amino-acid chain; its full sequence is Transcription factor E2-alpha (651 aa).

3 disordered regions span residues 32–107 (ANGK…SERN), 131–208 (LSLS…KTPS), and 341–378 (DHSS…ALSP). Low complexity-rich tracts occupy residues 56–73 (SSGS…FDPS), 131–148 (LSLS…KSSS), and 341–354 (DHSS…PSTP). Ser-135 and Ser-140 each carry phosphoserine. Thr-353 is subject to Phosphothreonine. At Ser-357 the chain carries Phosphoserine. Position 369 is an omega-N-methylarginine (Arg-369). Ser-377 carries the post-translational modification Phosphoserine. The leucine-zipper stretch occupies residues 387–422 (LSKMEDRLDEAIHVLRSHAVGTASDLHGLLPGHGAL). The interval 457–549 (HNHASLPSQP…KAEREKERRV (93 aa)) is disordered. The segment covering 461–479 (SLPSQPSSLPDLSQRPPDS) has biased composition (low complexity). Lys-496 is covalently cross-linked (Glycyl lysine isopeptide (Lys-Gly) (interchain with G-Cter in SUMO2)). Ser-526 carries the phosphoserine modification. Asp-528 carries the post-translational modification Phosphothreonine. Residue Asp-533 is modified to Phosphoserine. Residues 539-549 (QKAEREKERRV) show a composition bias toward basic and acidic residues. Residues 546 to 599 (ERRVANNARERLRVRDINEAFKELGRMCQLHLSSEKPQTKLLILHQAVAVILSL) form the bHLH domain. A Glycyl lysine isopeptide (Lys-Gly) (interchain with G-Cter in SUMO2) cross-link involves residue Lys-622.

Homodimer. Heterodimer; efficient DNA binding requires dimerization with another bHLH protein. Forms a heterodimer with TWIST1 and TWIST2. Forms a heterodimer with NEUROD1; the heterodimer is inhibited in presence of ID2, but not NR0B2, to E-box element. Forms a heterodimer with TCF15; the heterodimer binds E-box element. Forms a heterodimer with MYOG; heterodimerization enhances MYOG DNA-binding and transcriptional activities. Forms a heterodimer with ATOH8; repress transcription of TCF3 and TCF3-NEUROG3 dimer-induced transactivation of E box-dependent promoters. Component of a nuclear TAL-1 complex composed at least of CBFA2T3, LDB1, TAL1 and TCF3. Interacts with NEUROD2. Interacts with EP300. Interacts with PTF1A, TGFB1I1 and UBE2I. Interacts with BHLHA9. Interacts with ASB2; the interaction is mediated by SKP2 and targets TCF3 for Notch-induced proteasomal degradation. Interacts with transcription factor ASCL5/AmeloD. In terms of assembly, forms a heterodimer with ATOH7; required for ATOH7 DNA-binding. As to quaternary structure, interacts with RALGAPA1. Interacts with FIGLA. Phosphorylated following NGF stimulation. In terms of processing, undergoes Notch-induced ubiquitination and subsequent proteasomal degradation which is mediated by ASB1 or ASB2, the substrate-recognition components of probable ECS E3 ubiquitin-protein ligase complexes.

It is found in the nucleus. Its function is as follows. Transcriptional regulator involved in the initiation of neuronal differentiation and mesenchymal to epithelial transition. Heterodimers between TCF3 and tissue-specific basic helix-loop-helix (bHLH) proteins play major roles in determining tissue-specific cell fate during embryogenesis, like muscle or early B-cell differentiation. Together with TCF15, required for the mesenchymal to epithelial transition. Dimers bind DNA on E-box motifs: 5'-CANNTG-3'. Binds to the kappa-E2 site in the kappa immunoglobulin gene enhancer. Binds to IEB1 and IEB2, which are short DNA sequences in the insulin gene transcription control region. Functionally, facilitates ATOH7 binding to DNA at the consensus sequence 5'-CAGGTG-3', and positively regulates transcriptional activity. The chain is Transcription factor E2-alpha (Tcf3) from Mus musculus (Mouse).